The following is a 332-amino-acid chain: Heat-inducible transcription repressor HrcA (332 aa).

This sequence belongs to the HrcA family.

Its function is as follows. Negative regulator of class I heat shock genes (grpE-dnaK-dnaJ and groELS operons). Prevents heat-shock induction of these operons. This chain is Heat-inducible transcription repressor HrcA, found in Mycoplasma mobile (strain ATCC 43663 / 163K / NCTC 11711) (Mesomycoplasma mobile).